Consider the following 165-residue polypeptide: Lipoprotein signal peptidase (165 aa).

The next 3 helical transmembrane spans lie at 6–26 (SSVE…LLII), 68–88 (GKID…LFYF), and 95–115 (ISFL…GNMI). Active-site residues include D125 and D141. Residues 132-152 (IWSFIFNFADVWINIGVVLII) traverse the membrane as a helical segment.

It belongs to the peptidase A8 family.

The protein localises to the cell inner membrane. It carries out the reaction Release of signal peptides from bacterial membrane prolipoproteins. Hydrolyzes -Xaa-Yaa-Zaa-|-(S,diacylglyceryl)Cys-, in which Xaa is hydrophobic (preferably Leu), and Yaa (Ala or Ser) and Zaa (Gly or Ala) have small, neutral side chains.. It functions in the pathway protein modification; lipoprotein biosynthesis (signal peptide cleavage). Its function is as follows. This protein specifically catalyzes the removal of signal peptides from prolipoproteins. The polypeptide is Lipoprotein signal peptidase (Fusobacterium nucleatum subsp. nucleatum (strain ATCC 25586 / DSM 15643 / BCRC 10681 / CIP 101130 / JCM 8532 / KCTC 2640 / LMG 13131 / VPI 4355)).